Consider the following 724-residue polypeptide: Putative methyltransferase NSUN7 (724 aa).

Catalysis depends on Cys-444, which acts as the Nucleophile. Disordered stretches follow at residues 542 to 574 (KTLKRDKKRKKSKALPSRAPHHGDPLRDHLAVD), 595 to 629 (ISTSTKMSAPAKTVSQAGTSSQVRKPSKPLSTPLV), and 698 to 724 (TSSTSRRKEKVKESTTSSHVRHPRPWL). The segment covering 543 to 554 (TLKRDKKRKKSK) has biased composition (basic residues). A compositionally biased stretch (basic and acidic residues) spans 562-572 (HHGDPLRDHLA). Positions 595–618 (ISTSTKMSAPAKTVSQAGTSSQVR) are enriched in polar residues.

Belongs to the class I-like SAM-binding methyltransferase superfamily. RsmB/NOP family. As to expression, expressed in testis.

In terms of biological role, may have S-adenosyl-L-methionine-dependent methyl-transferase activity. The chain is Putative methyltransferase NSUN7 (Nsun7) from Mus musculus (Mouse).